The sequence spans 188 residues: Putative 3-methyladenine DNA glycosylase (188 aa).

Belongs to the DNA glycosylase MPG family.

This chain is Putative 3-methyladenine DNA glycosylase, found in Ehrlichia ruminantium (strain Welgevonden).